The chain runs to 213 residues: NADH dehydrogenase [ubiquinone] iron-sulfur protein 7, mitochondrial (213 aa).

A mitochondrion-targeting transit peptide spans 1–31; the sequence is MALIARNAKLLTGTAPFLQRAATIHTTLPSL. Low complexity predominate over residues 30–42; the sequence is SLSQQPASSPATS. The segment at 30-52 is disordered; that stretch reads SLSQQPASSPATSGGAQPPSMNT. Cys-88, Cys-89, Cys-153, and Cys-183 together coordinate [4Fe-4S] cluster.

It belongs to the complex I 20 kDa subunit family. In terms of assembly, complex I is composed of about 45 different subunits. This is a component of the iron-sulfur (IP) fragment of the enzyme. Requires [4Fe-4S] cluster as cofactor.

It is found in the mitochondrion. It carries out the reaction a ubiquinone + NADH + 5 H(+)(in) = a ubiquinol + NAD(+) + 4 H(+)(out). Core subunit of the mitochondrial membrane respiratory chain NADH dehydrogenase (Complex I) that is believed to belong to the minimal assembly required for catalysis. Complex I functions in the transfer of electrons from NADH to the respiratory chain. The immediate electron acceptor for the enzyme is believed to be ubiquinone. The polypeptide is NADH dehydrogenase [ubiquinone] iron-sulfur protein 7, mitochondrial (Solanum tuberosum (Potato)).